Reading from the N-terminus, the 173-residue chain is Shikimate kinase (173 aa).

14 to 19 (GAGKST) is a binding site for ATP. Ser18 provides a ligand contact to Mg(2+). Residues Asp36, Arg60, and Gly82 each coordinate substrate. Arg120 provides a ligand contact to ATP. Arg140 contributes to the substrate binding site. Gln157 lines the ATP pocket.

It belongs to the shikimate kinase family. As to quaternary structure, monomer. It depends on Mg(2+) as a cofactor.

The protein resides in the cytoplasm. It catalyses the reaction shikimate + ATP = 3-phosphoshikimate + ADP + H(+). The protein operates within metabolic intermediate biosynthesis; chorismate biosynthesis; chorismate from D-erythrose 4-phosphate and phosphoenolpyruvate: step 5/7. Functionally, catalyzes the specific phosphorylation of the 3-hydroxyl group of shikimic acid using ATP as a cosubstrate. The chain is Shikimate kinase from Buchnera aphidicola subsp. Schizaphis graminum (strain Sg).